An 882-amino-acid polypeptide reads, in one-letter code: Translation initiation factor IF-2 (882 aa).

Residues 38–294 (IEDSQASWVK…KSKHKRKKEN (257 aa)) are disordered. Composition is skewed to basic and acidic residues over residues 66–76 (TRDEAVKKHSG), 109–128 (GRREFSENREQSRKGEERHS), and 207–219 (PDNKGSRPSDAKR). Residues 282 to 292 (PGRKSKHKRKK) are compositionally biased toward basic residues. The region spanning 383 to 556 (ARPPVVTIMG…EMNEIRANPD (174 aa)) is the tr-type G domain. The tract at residues 392–399 (GHVDHGKT) is G1. 392–399 (GHVDHGKT) provides a ligand contact to GTP. The G2 stretch occupies residues 417 to 421 (GITQH). Residues 438–441 (DTPG) are G3. Residues 438–442 (DTPGH) and 492–495 (NKID) each bind GTP. The tract at residues 492–495 (NKID) is G4. The segment at 528-530 (SAK) is G5.

The protein belongs to the TRAFAC class translation factor GTPase superfamily. Classic translation factor GTPase family. IF-2 subfamily.

The protein resides in the cytoplasm. Functionally, one of the essential components for the initiation of protein synthesis. Protects formylmethionyl-tRNA from spontaneous hydrolysis and promotes its binding to the 30S ribosomal subunits. Also involved in the hydrolysis of GTP during the formation of the 70S ribosomal complex. This Syntrophomonas wolfei subsp. wolfei (strain DSM 2245B / Goettingen) protein is Translation initiation factor IF-2.